A 363-amino-acid chain; its full sequence is tRNA(Met) cytidine acetate ligase (363 aa).

ATP-binding positions include 7–20 (IAEF…HKYL), Gly96, Asn152, and Arg175.

The protein belongs to the TmcAL family.

It is found in the cytoplasm. The enzyme catalyses cytidine(34) in elongator tRNA(Met) + acetate + ATP = N(4)-acetylcytidine(34) in elongator tRNA(Met) + AMP + diphosphate. Its function is as follows. Catalyzes the formation of N(4)-acetylcytidine (ac(4)C) at the wobble position of elongator tRNA(Met), using acetate and ATP as substrates. First activates an acetate ion to form acetyladenylate (Ac-AMP) and then transfers the acetyl group to tRNA to form ac(4)C34. This is tRNA(Met) cytidine acetate ligase from Streptococcus thermophilus (strain ATCC BAA-250 / LMG 18311).